We begin with the raw amino-acid sequence, 208 residues long: V-type ATP synthase subunit D (208 aa).

Belongs to the V-ATPase D subunit family.

In terms of biological role, produces ATP from ADP in the presence of a proton gradient across the membrane. This is V-type ATP synthase subunit D from Chlamydia felis (strain Fe/C-56) (Chlamydophila felis).